The primary structure comprises 701 residues: Transcriptional regulator Kaiso (701 aa).

One can recognise a BTB domain in the interval 32–94 (CDVTVIVEDR…IYSSKIVRVR (63 aa)). Disordered stretches follow at residues 128–158 (GAGG…SPLP) and 181–311 (SSDD…QNQH). The span at 245–258 (TPSSQVQLTQNSLP) shows a compositional bias: polar residues. Over residues 259–273 (TNQQSSKNTSSTTQK) the composition is skewed to low complexity. Positions 278 to 311 (VNANISKNPTPAANGFLSPTAQKQGTPNAVQNQH) are enriched in polar residues. The interval 470–609 (AKLDLDGLPN…QIRQYAYVNN (140 aa)) is required for methylation dependent DNA-binding. 3 consecutive C2H2-type zinc fingers follow at residues 501 to 523 (YICI…FNVH), 529 to 551 (YPCR…EIHH), and 557 to 580 (YQCL…RSVH). The required for sequence specific DNA-binding stretch occupies residues 519 to 701 (HFNVHSWEKK…EFEFVIPESY (183 aa)). The disordered stretch occupies residues 644–664 (DIDPDEPQQPASEGNHANSAT). Residues 652–664 (QPASEGNHANSAT) show a composition bias toward polar residues.

As to quaternary structure, self associates. Interacts with tcf7l1-A, leading to repression of tcf7l1-A target genes. Interacts with ctnnd1, and this interaction may inhibit DNA-binding. Interacts with ncor1.

The protein resides in the nucleus. Functionally, transcriptional regulator with bimodal DNA-binding specificity. Binds to methylated CpG dinucleotides in the consensus sequence 5'-CGCG-3' and also binds to the non-methylated consensus sequence 5'-CTGCNA-3'. May recruit the N-CoR repressor complex to promote histone deacetylation and the formation of repressive chromatin structures in target gene promoters. Contributes to the repression of target genes of the Wnt signaling pathway and to the methylation-dependent repression of zygotic transcription prior to the mid-blastula transition (MBT). Also required for gastrulation movements. This chain is Transcriptional regulator Kaiso (zbtb33), found in Xenopus laevis (African clawed frog).